Here is a 397-residue protein sequence, read N- to C-terminus: Elongation factor Tu (397 aa).

The 197-residue stretch at 10-206 folds into the tr-type G domain; that stretch reads KPHVNIGTIG…AVDESIPEPQ (197 aa). A G1 region spans residues 19–26; it reads GHIDHGKT. 19–26 contacts GTP; that stretch reads GHIDHGKT. Thr-26 contributes to the Mg(2+) binding site. Residues 62–66 form a G2 region; it reads GITIS. The tract at residues 83 to 86 is G3; it reads DCPG. Residues 83 to 87 and 138 to 141 each bind GTP; these read DCPGH and NKAD. A G4 region spans residues 138–141; that stretch reads NKAD. The interval 176-178 is G5; sequence SAL.

Belongs to the TRAFAC class translation factor GTPase superfamily. Classic translation factor GTPase family. EF-Tu/EF-1A subfamily. In terms of assembly, monomer.

Its subcellular location is the cytoplasm. The enzyme catalyses GTP + H2O = GDP + phosphate + H(+). GTP hydrolase that promotes the GTP-dependent binding of aminoacyl-tRNA to the A-site of ribosomes during protein biosynthesis. The protein is Elongation factor Tu of Frankia casuarinae (strain DSM 45818 / CECT 9043 / HFP020203 / CcI3).